A 37-amino-acid polypeptide reads, in one-letter code: MKVRPSVKPICEKCKVIKRKGKVMVICDNPKHKQRQG.

This sequence belongs to the bacterial ribosomal protein bL36 family.

The protein is Large ribosomal subunit protein bL36 of Staphylococcus epidermidis (strain ATCC 35984 / DSM 28319 / BCRC 17069 / CCUG 31568 / BM 3577 / RP62A).